A 540-amino-acid chain; its full sequence is Chaperonin GroEL (540 aa).

ATP contacts are provided by residues 29-32, 86-90, glycine 413, 476-478, and aspartate 492; these read TLGP, DGTTT, and NAA.

This sequence belongs to the chaperonin (HSP60) family. As to quaternary structure, forms a cylinder of 14 subunits composed of two heptameric rings stacked back-to-back. Interacts with the co-chaperonin GroES.

It localises to the cytoplasm. The catalysed reaction is ATP + H2O + a folded polypeptide = ADP + phosphate + an unfolded polypeptide.. Functionally, together with its co-chaperonin GroES, plays an essential role in assisting protein folding. The GroEL-GroES system forms a nano-cage that allows encapsulation of the non-native substrate proteins and provides a physical environment optimized to promote and accelerate protein folding. This Streptococcus pneumoniae (strain ATCC 700669 / Spain 23F-1) protein is Chaperonin GroEL.